The primary structure comprises 541 residues: NEDD8-activating enzyme E1 regulatory subunit (541 aa).

This sequence belongs to the ubiquitin-activating E1 family. ULA1 subfamily. In terms of assembly, heterodimer of uba-3 and ula-1. The complex binds NEDD8 and ubc-12.

It functions in the pathway protein modification; protein neddylation. Its function is as follows. Regulatory subunit of the dimeric uba-3-ula-1 E1 enzyme. E1 activates NEDD8 by first adenylating its C-terminal glycine residue with ATP, thereafter linking this residue to the side chain of the catalytic cysteine, yielding a NEDD8-rfl-1 (uba-3) thioester and free AMP. E1 finally transfers NEDD8 to the catalytic cysteine of ubc-12. Required for rfl-1 (uba-3) nuclear localization during early embryonic development. The protein is NEDD8-activating enzyme E1 regulatory subunit (ula-1) of Caenorhabditis elegans.